Here is a 256-residue protein sequence, read N- to C-terminus: Small ribosomal subunit protein eS1 (256 aa).

Residues 1-18 (MAVGKNKRLSKGKKGVKK) are compositionally biased toward basic residues. The tract at residues 1–21 (MAVGKNKRLSKGKKGVKKRTV) is disordered. At Ala-2 the chain carries N-acetylalanine; partial.

It belongs to the eukaryotic ribosomal protein eS1 family. As to quaternary structure, component of the small ribosomal subunit. Mature ribosomes consist of a small (40S) and a large (60S) subunit. The 40S subunit contains about 33 different proteins and 1 molecule of RNA (18S). The 60S subunit contains about 49 different proteins and 3 molecules of RNA (25S, 5.8S and 5S).

It localises to the cytoplasm. This chain is Small ribosomal subunit protein eS1 (rps1), found in Aspergillus niger (strain ATCC MYA-4892 / CBS 513.88 / FGSC A1513).